The primary structure comprises 288 residues: Energy-coupling factor transporter ATP-binding protein EcfA2 (288 aa).

The region spanning Ile3–Ser246 is the ABC transporter domain. Gly40–Ser47 provides a ligand contact to ATP.

This sequence belongs to the ABC transporter superfamily. Energy-coupling factor EcfA family. In terms of assembly, forms a stable energy-coupling factor (ECF) transporter complex composed of 2 membrane-embedded substrate-binding proteins (S component), 2 ATP-binding proteins (A component) and 2 transmembrane proteins (T component).

Its subcellular location is the cell membrane. ATP-binding (A) component of a common energy-coupling factor (ECF) ABC-transporter complex. Unlike classic ABC transporters this ECF transporter provides the energy necessary to transport a number of different substrates. The sequence is that of Energy-coupling factor transporter ATP-binding protein EcfA2 from Listeria innocua serovar 6a (strain ATCC BAA-680 / CLIP 11262).